The sequence spans 156 residues: Small ribosomal subunit protein uS7 (156 aa).

This sequence belongs to the universal ribosomal protein uS7 family. In terms of assembly, part of the 30S ribosomal subunit. Contacts proteins S9 and S11.

Its function is as follows. One of the primary rRNA binding proteins, it binds directly to 16S rRNA where it nucleates assembly of the head domain of the 30S subunit. Is located at the subunit interface close to the decoding center, probably blocks exit of the E-site tRNA. The polypeptide is Small ribosomal subunit protein uS7 (Photorhabdus laumondii subsp. laumondii (strain DSM 15139 / CIP 105565 / TT01) (Photorhabdus luminescens subsp. laumondii)).